Here is a 479-residue protein sequence, read N- to C-terminus: Anaerobic nitric oxide reductase flavorubredoxin (479 aa).

Residues 30 to 210 (LRGSSYNSYL…PFSRLVTPKI (181 aa)) form a zinc metallo-hydrolase region. The Fe cation site is built by His-79, Glu-81, Asp-83, His-147, Asp-166, and His-227. The 140-residue stretch at 254–393 (ITIFYDTMSN…LCRQHGRDIA (140 aa)) folds into the Flavodoxin-like domain. FMN is bound by residues 260-264 (TMSNN) and 342-369 (AFGSHGWSGGAVDRLSTRLQDAGFEMSL). In terms of domain architecture, Rubredoxin-like spans 423–474 (GPKMQCSVCQWIYDPAQGEPLQDVAPGTPWSDVPDNFLCPECSLGKDVFDVL). Fe cation-binding residues include Cys-428, Cys-431, Cys-461, and Cys-464.

It in the N-terminal section; belongs to the zinc metallo-hydrolase group 3 family. As to quaternary structure, homotetramer. Requires Fe cation as cofactor. The cofactor is FMN.

The protein localises to the cytoplasm. It functions in the pathway nitrogen metabolism; nitric oxide reduction. Functionally, anaerobic nitric oxide reductase; uses NADH to detoxify nitric oxide (NO), protecting several 4Fe-4S NO-sensitive enzymes. Has at least 2 reductase partners, only one of which (NorW, flavorubredoxin reductase) has been identified. NO probably binds to the di-iron center; electrons enter from the NorW at rubredoxin and are transferred sequentially to the FMN center and the di-iron center. Also able to function as an aerobic oxygen reductase. The polypeptide is Anaerobic nitric oxide reductase flavorubredoxin (Salmonella choleraesuis (strain SC-B67)).